We begin with the raw amino-acid sequence, 237 residues long: MRFPVPLVPARLVRRYKRFLADAVLEDGTELTAHVANSGAMLGLMAPGARVWLAPKSGKTAKLPYGWELVEADLGAGPELVGVNTMHPNVLVAEAIAAGKVPELAGYARMRREVKYGVNSRIDILLEDDDRPPCFVEVKNVHLMRAPGHAEFPDCATARGAKHLAELAAEVKAGHRAVMVYLSQIASARDIRLARDLDPAYGRAFDLARTAGVEAIGLVCRIDAQGIEVTGTIPMLG.

It belongs to the SfsA family.

This Azorhizobium caulinodans (strain ATCC 43989 / DSM 5975 / JCM 20966 / LMG 6465 / NBRC 14845 / NCIMB 13405 / ORS 571) protein is Sugar fermentation stimulation protein homolog.